The sequence spans 463 residues: MGNLLRHLPQLDALLSTAAMASLLERYSREEVADALRAALQEVRKGVQAGHMDSLPDFESAGFVSGVMAGIEARRRPNLVAAINATGIIIHTNLGRARLAPEAMAAVQAAGAHASNLELDLATGRRGSRYAHVEALICELTGAEAALVVNNCAAAVLLSLMATAQGRKVIASRGELIEIGGSFRLPDVIQQSGATLKEVGATNKTRASDYAQAIDAETAVLLKSHTSNYQIVGFTHAPQREELASLARETGTILMEDLGSGVLVDLSPYGLNDEPVVSDVLKSGVDVVMFSGDKLLGGPQCGIIAGRADIIVSLKKHPLCRAVRIDKLSLAALEATLRLYRAPHDPFQKVPVLRAISQPVEEIEARARRLAGELTVAGIVDVMCIPSRAYVGGGSLPQQNLESCAVTVIVPHLSPDALAAALRAARPPVIGMIREDRFVMDVRTLIDGDLPGIVEAFRQVALR.

Lys-294 carries the post-translational modification N6-(pyridoxal phosphate)lysine.

It belongs to the SelA family. Requires pyridoxal 5'-phosphate as cofactor.

The protein resides in the cytoplasm. It carries out the reaction L-seryl-tRNA(Sec) + selenophosphate + H(+) = L-selenocysteinyl-tRNA(Sec) + phosphate. It participates in aminoacyl-tRNA biosynthesis; selenocysteinyl-tRNA(Sec) biosynthesis; selenocysteinyl-tRNA(Sec) from L-seryl-tRNA(Sec) (bacterial route): step 1/1. In terms of biological role, converts seryl-tRNA(Sec) to selenocysteinyl-tRNA(Sec) required for selenoprotein biosynthesis. This Hyphomonas neptunium (strain ATCC 15444) protein is L-seryl-tRNA(Sec) selenium transferase.